A 143-amino-acid polypeptide reads, in one-letter code: Peptide methionine sulfoxide reductase MsrB (143 aa).

Residues 16–139 (DAELRRRLTP…NSAALNFESR (124 aa)) form the MsrB domain. Zn(2+)-binding residues include Cys55, Cys58, Cys104, and Cys107. The Nucleophile role is filled by Cys128.

It belongs to the MsrB Met sulfoxide reductase family. Zn(2+) serves as cofactor.

It catalyses the reaction L-methionyl-[protein] + [thioredoxin]-disulfide + H2O = L-methionyl-(R)-S-oxide-[protein] + [thioredoxin]-dithiol. In Burkholderia ambifaria (strain ATCC BAA-244 / DSM 16087 / CCUG 44356 / LMG 19182 / AMMD) (Burkholderia cepacia (strain AMMD)), this protein is Peptide methionine sulfoxide reductase MsrB.